Consider the following 507-residue polypeptide: ATP synthase subunit beta (507 aa).

The interval methionine 1–asparagine 22 is disordered. Glycine 183–threonine 190 contacts ATP.

This sequence belongs to the ATPase alpha/beta chains family. As to quaternary structure, F-type ATPases have 2 components, CF(1) - the catalytic core - and CF(0) - the membrane proton channel. CF(1) has five subunits: alpha(3), beta(3), gamma(1), delta(1), epsilon(1). CF(0) has three main subunits: a(1), b(2) and c(9-12). The alpha and beta chains form an alternating ring which encloses part of the gamma chain. CF(1) is attached to CF(0) by a central stalk formed by the gamma and epsilon chains, while a peripheral stalk is formed by the delta and b chains.

It is found in the cell inner membrane. The catalysed reaction is ATP + H2O + 4 H(+)(in) = ADP + phosphate + 5 H(+)(out). Functionally, produces ATP from ADP in the presence of a proton gradient across the membrane. The catalytic sites are hosted primarily by the beta subunits. In Ehrlichia chaffeensis (strain ATCC CRL-10679 / Arkansas), this protein is ATP synthase subunit beta.